The chain runs to 158 residues: Endoribonuclease YbeY (158 aa).

The Zn(2+) site is built by H117, H121, and H127.

This sequence belongs to the endoribonuclease YbeY family. Zn(2+) is required as a cofactor.

It localises to the cytoplasm. Functionally, single strand-specific metallo-endoribonuclease involved in late-stage 70S ribosome quality control and in maturation of the 3' terminus of the 16S rRNA. The polypeptide is Endoribonuclease YbeY (Buchnera aphidicola subsp. Schizaphis graminum (strain Sg)).